The chain runs to 152 residues: DNA-binding transcriptional activator DecR (152 aa).

The 62-residue stretch at 2 to 63 folds into the HTH asnC-type domain; that stretch reads LDKIDRKLLA…LLDPEKIGLG (62 aa). The segment at residues 21 to 40 is a DNA-binding region (H-T-H motif); that stretch reads LQALAEAVNLTTTPCWKRLK.

In terms of biological role, plays a role in L-cysteine detoxification. Binds to the dlsT(yhaO)-yhaM operon promoter in the presence but not absence of L-cysteine; activates transcription from the dlsT(yhaO)-yhaM operon. In Escherichia coli O157:H7, this protein is DNA-binding transcriptional activator DecR (decR).